Here is a 442-residue protein sequence, read N- to C-terminus: Histidinol dehydrogenase (442 aa).

The NAD(+) site is built by Tyr-138, Gln-199, and Asn-222. Positions 245, 267, and 270 each coordinate substrate. Zn(2+) contacts are provided by Gln-267 and His-270. Active-site proton acceptor residues include Glu-335 and His-336. Substrate is bound by residues His-336, Asp-369, Glu-423, and His-428. Asp-369 provides a ligand contact to Zn(2+). His-428 is a binding site for Zn(2+).

Belongs to the histidinol dehydrogenase family. Zn(2+) is required as a cofactor.

The enzyme catalyses L-histidinol + 2 NAD(+) + H2O = L-histidine + 2 NADH + 3 H(+). It participates in amino-acid biosynthesis; L-histidine biosynthesis; L-histidine from 5-phospho-alpha-D-ribose 1-diphosphate: step 9/9. Functionally, catalyzes the sequential NAD-dependent oxidations of L-histidinol to L-histidinaldehyde and then to L-histidine. The chain is Histidinol dehydrogenase from Ralstonia nicotianae (strain ATCC BAA-1114 / GMI1000) (Ralstonia solanacearum).